The primary structure comprises 121 residues: Large ribosomal subunit protein bL20 (121 aa).

It belongs to the bacterial ribosomal protein bL20 family.

Its function is as follows. Binds directly to 23S ribosomal RNA and is necessary for the in vitro assembly process of the 50S ribosomal subunit. It is not involved in the protein synthesizing functions of that subunit. This is Large ribosomal subunit protein bL20 from Orientia tsutsugamushi (strain Ikeda) (Rickettsia tsutsugamushi).